A 147-amino-acid polypeptide reads, in one-letter code: Large ribosomal subunit protein uL15 (147 aa).

Positions 1–28 (MIRRRKKVRKLRGSHTHGWGCKKKHRGG) are enriched in basic residues. Residues 1-43 (MIRRRKKVRKLRGSHTHGWGCKKKHRGGGSKGGRGMAGTGKRN) are disordered. Gly residues predominate over residues 29–38 (GSKGGRGMAG).

It belongs to the universal ribosomal protein uL15 family. As to quaternary structure, part of the 50S ribosomal subunit.

Its function is as follows. Binds to the 23S rRNA. This Pyrococcus horikoshii (strain ATCC 700860 / DSM 12428 / JCM 9974 / NBRC 100139 / OT-3) protein is Large ribosomal subunit protein uL15.